We begin with the raw amino-acid sequence, 456 residues long: Phosphomannomutase (456 aa).

Ser-98 functions as the Phosphoserine intermediate in the catalytic mechanism. Ser-98, Asp-245, Asp-247, and Asp-249 together coordinate Mg(2+).

It belongs to the phosphohexose mutase family. Requires Mg(2+) as cofactor.

The catalysed reaction is alpha-D-mannose 1-phosphate = D-mannose 6-phosphate. Its pathway is nucleotide-sugar biosynthesis; GDP-alpha-D-mannose biosynthesis; alpha-D-mannose 1-phosphate from D-fructose 6-phosphate: step 2/2. Involved in the biosynthesis of the capsular polysaccharide colanic acid. The chain is Phosphomannomutase (manB) from Escherichia coli (strain K12).